Reading from the N-terminus, the 191-residue chain is Small ribosomal subunit protein eS7 (191 aa).

It belongs to the eukaryotic ribosomal protein eS7 family.

This Hordeum vulgare (Barley) protein is Small ribosomal subunit protein eS7 (RPS7).